Consider the following 78-residue polypeptide: RNA-binding protein Hfq (78 aa).

The region spanning 10 to 69 is the Sm domain; it reads DPFLNALRKEHVPVSIYLVNGIKLQGHIESFDQYVVLLRNTVTQMVYKHAISTVVPARAV.

This sequence belongs to the Hfq family. Homohexamer.

In terms of biological role, RNA chaperone that binds small regulatory RNA (sRNAs) and mRNAs to facilitate mRNA translational regulation in response to envelope stress, environmental stress and changes in metabolite concentrations. Also binds with high specificity to tRNAs. The sequence is that of RNA-binding protein Hfq from Janthinobacterium sp. (strain Marseille) (Minibacterium massiliensis).